The following is a 142-amino-acid chain: Large ribosomal subunit protein uL16 (142 aa).

Belongs to the universal ribosomal protein uL16 family. In terms of assembly, part of the 50S ribosomal subunit.

In terms of biological role, binds 23S rRNA and is also seen to make contacts with the A and possibly P site tRNAs. This is Large ribosomal subunit protein uL16 from Aquifex aeolicus (strain VF5).